A 180-amino-acid chain; its full sequence is Negative modulator of initiation of replication (180 aa).

Positions 87 to 88 (AV) are interaction with DNA.

Belongs to the SeqA family. Homodimer. Polymerizes to form helical filaments.

Its subcellular location is the cytoplasm. Functionally, negative regulator of replication initiation, which contributes to regulation of DNA replication and ensures that replication initiation occurs exactly once per chromosome per cell cycle. Binds to pairs of hemimethylated GATC sequences in the oriC region, thus preventing assembly of replication proteins and re-initiation at newly replicated origins. Repression is relieved when the region becomes fully methylated. This Ferrimonas balearica (strain DSM 9799 / CCM 4581 / KCTC 23876 / PAT) protein is Negative modulator of initiation of replication.